A 108-amino-acid chain; its full sequence is Transcription initiation factor IIA subunit 2 (108 aa).

It belongs to the TFIIA subunit 2 family. As to quaternary structure, TFIIA is a heterodimer of the large unprocessed subunit 1 and a small subunit gamma. It was originally believed to be a heterotrimer of an alpha, a beta and a gamma subunit. Interacts with NCOA6 general coactivator. TFIIA forms a complex with TBP.

The protein resides in the nucleus. TFIIA is a component of the transcription machinery of RNA polymerase II and plays an important role in transcriptional activation. TFIIA in a complex with TBP mediates transcriptional activity. In Oncorhynchus mykiss (Rainbow trout), this protein is Transcription initiation factor IIA subunit 2 (gtf2a2).